Reading from the N-terminus, the 173-residue chain is Small ribosomal subunit protein uS5 (173 aa).

The S5 DRBM domain occupies 16 to 79 (LSELLVSVRR…NAAKKNMIRV (64 aa)).

This sequence belongs to the universal ribosomal protein uS5 family. As to quaternary structure, part of the 30S ribosomal subunit. Contacts proteins S4 and S8.

Its function is as follows. With S4 and S12 plays an important role in translational accuracy. In terms of biological role, located at the back of the 30S subunit body where it stabilizes the conformation of the head with respect to the body. This is Small ribosomal subunit protein uS5 from Anaplasma phagocytophilum (strain HZ).